A 611-amino-acid polypeptide reads, in one-letter code: Threonine--tRNA ligase (611 aa).

Residues 211–509 (DHRKLGTELE…LTEHYAGEFP (299 aa)) form a catalytic region. The Zn(2+) site is built by Cys-310, His-361, and His-486.

Belongs to the class-II aminoacyl-tRNA synthetase family. Homodimer. Zn(2+) serves as cofactor.

It is found in the cytoplasm. The catalysed reaction is tRNA(Thr) + L-threonine + ATP = L-threonyl-tRNA(Thr) + AMP + diphosphate + H(+). Catalyzes the attachment of threonine to tRNA(Thr) in a two-step reaction: L-threonine is first activated by ATP to form Thr-AMP and then transferred to the acceptor end of tRNA(Thr). Also edits incorrectly charged L-seryl-tRNA(Thr). The protein is Threonine--tRNA ligase of Nautilia profundicola (strain ATCC BAA-1463 / DSM 18972 / AmH).